The primary structure comprises 382 residues: 2-heptyl-3-hydroxy-4(1H)-quinolone synthase (382 aa).

It belongs to the 3-hydroxybenzoate 6-hydroxylase family.

It carries out the reaction 2-heptyl-4(1H)-quinolone + NADH + O2 + H(+) = 2-heptyl-3-hydroxy-4(1H)-quinolone + NAD(+) + H2O. Involved in the terminal step of the biosynthesis of quinolone which in addition to serve as a potent signal for quorum sensing, chelates iron and promotes the formation of membrane vesicles (MVs). Catalyzes the hydroxylation of 2-heptyl-4-quinolone (C7-HHQ) to yield 2-heptyl-3-hydroxy-4-quinolone (PQS). PqsH is also able to hydroxylate HHQ analogs having alkyl side-chain lengths of 3 (C3-HHQ), 5 (C5-HHQ) and 9 (C9-HHQ) carbons, however catalytic efficiencies are significantly reduced for substrates with alkyl side-chain lengths below 7 carbons. The protein is 2-heptyl-3-hydroxy-4(1H)-quinolone synthase (pqsH) of Pseudomonas aeruginosa (strain UCBPP-PA14).